The chain runs to 305 residues: N-acetylneuraminate lyase (305 aa).

Thr51 and Thr52 together coordinate aceneuramate. Tyr143 (proton donor) is an active-site residue. Catalysis depends on Lys173, which acts as the Schiff-base intermediate with substrate. The aceneuramate site is built by Thr175, Gly197, Asp199, Glu200, and Ser216.

Belongs to the DapA family. NanA subfamily. In terms of assembly, homotetramer.

It localises to the cytoplasm. The enzyme catalyses aceneuramate = aldehydo-N-acetyl-D-mannosamine + pyruvate. The protein operates within amino-sugar metabolism; N-acetylneuraminate degradation. In terms of biological role, catalyzes the cleavage of N-acetylneuraminic acid (sialic acid) to form pyruvate and N-acetylmannosamine via a Schiff base intermediate. It prevents sialic acids from being recycled and returning to the cell surface. Involved in the N-glycolylneuraminic acid (Neu5Gc) degradation pathway. The polypeptide is N-acetylneuraminate lyase (Xenopus tropicalis (Western clawed frog)).